The sequence spans 384 residues: Heparin lyase I (384 aa).

An N-terminal signal peptide occupies residues 1-21 (MKKQILYLIVLQQLFLCSAYA). The residue at position 22 (Gln-22) is a Blocked amino end (Gln). The O-linked (Man...) serine glycan is linked to Ser-39.

As to quaternary structure, monomer. The N-terminus is blocked.

The protein localises to the periplasm. It carries out the reaction Eliminative cleavage of polysaccharides containing (1-&gt;4)-linked D-glucuronate or L-iduronate residues and (1-&gt;4)-alpha-linked 2-sulfoamino-2-deoxy-6-sulfo-D-glucose residues to give oligosaccharides with terminal 4-deoxy-alpha-D-gluc-4-enuronosyl groups at their non-reducing ends.. In terms of biological role, degrades heparin and heparan sulfate. Also implicated in the release of heparin-bound growth factors from the extracellular matrix. This chain is Heparin lyase I, found in Pedobacter heparinus (Flavobacterium heparinum).